Here is a 281-residue protein sequence, read N- to C-terminus: Probable endonuclease 4 (281 aa).

The Zn(2+) site is built by His-69, His-109, Glu-145, Asp-179, His-182, His-216, Asp-229, His-231, and Glu-261.

Belongs to the AP endonuclease 2 family. Zn(2+) is required as a cofactor.

The enzyme catalyses Endonucleolytic cleavage to 5'-phosphooligonucleotide end-products.. Functionally, endonuclease IV plays a role in DNA repair. It cleaves phosphodiester bonds at apurinic or apyrimidinic (AP) sites, generating a 3'-hydroxyl group and a 5'-terminal sugar phosphate. This chain is Probable endonuclease 4, found in Aeromonas salmonicida (strain A449).